A 213-amino-acid chain; its full sequence is Orotate phosphoribosyltransferase (213 aa).

K26 provides a ligand contact to 5-phospho-alpha-D-ribose 1-diphosphate. 34–35 (FF) is a binding site for orotate. Residues 72-73 (YK), R99, K100, K103, H105, and 124-132 (DDVITAGTA) contribute to the 5-phospho-alpha-D-ribose 1-diphosphate site. Orotate contacts are provided by T128 and R156.

Belongs to the purine/pyrimidine phosphoribosyltransferase family. PyrE subfamily. As to quaternary structure, homodimer. Requires Mg(2+) as cofactor.

The catalysed reaction is orotidine 5'-phosphate + diphosphate = orotate + 5-phospho-alpha-D-ribose 1-diphosphate. Its pathway is pyrimidine metabolism; UMP biosynthesis via de novo pathway; UMP from orotate: step 1/2. Its function is as follows. Catalyzes the transfer of a ribosyl phosphate group from 5-phosphoribose 1-diphosphate to orotate, leading to the formation of orotidine monophosphate (OMP). This is Orotate phosphoribosyltransferase from Shigella dysenteriae serotype 1 (strain Sd197).